The chain runs to 861 residues: Ataxin-7-like protein 1 (861 aa).

Disordered stretches follow at residues 1–31, 154–189, 342–448, 606–673, and 772–861; these read MTSE…AMAT, GHHS…KGSR, KSRE…GADE, PIPA…LSGP, and FDKS…RTLP. One can recognise an SCA7 domain in the interval 284 to 351; it reads RRLSEREFDP…KSREKEVKDK (68 aa). The segment covering 342–354 has biased composition (basic and acidic residues); sequence KSREKEVKDKEHL. Residues 355–369 show a composition bias toward polar residues; it reads LTSTREILPSQSGPA. Composition is skewed to low complexity over residues 372 to 381, 403 to 417, and 606 to 616; these read SLLGSSGSSG, SSAN…SNHS, and PIPAVIPSPSH. Positions 617 to 627 are enriched in basic residues; that stretch reads KPSKTKTSKSS. A compositionally biased stretch (basic and acidic residues) spans 628-641; the sequence is KVKDLSTRSDESPS. 2 stretches are compositionally biased toward low complexity: residues 648-671 and 783-794; these read QSST…SPLS and SSSSSKACKITK. Residues 817 to 828 show a composition bias toward polar residues; that stretch reads VNSTSSRQVGKN. Residues 829-847 are compositionally biased toward low complexity; that stretch reads SSLALSQSSPSSISSPGHS.

In Homo sapiens (Human), this protein is Ataxin-7-like protein 1 (ATXN7L1).